Reading from the N-terminus, the 372-residue chain is MNSGIDLQGTFIKSLIDLGIPPGTAKAIWMPLPMILMLIGATVGVLVCVWLERKISAAAQQRIGPEYIGPLGLLAPVADGLKLVFKEDIVPAQADPWLFTLGPILVVLPVFLSYLIVPFGQNIVITNVGTGIFLWIALSSIQPIGLLMAGYSSNNKYSLLGGLRAAAQSISYEIPLALSVLAIVMMSNSLSTVDIVNQQSDYGILGWNIWRQPLGFMIFWIAALAECERLPFDLPEAEEELVAGYQTEYSGMKFALFYLSSYVNLILSALLVAVLYLGGWDFPIPINVLANLVGVSEANPVLQVVSAALGITMTLVKAYFLVFIAILLRWTVPRVRIDQLLDLGWKFLLPVGLVNLLLTAALKLAFPVAFGG.

9 helical membrane passes run 27–47 (AIWMPLPMILMLIGATVGVLV), 65–85 (PEYIGPLGLLAPVADGLKLVF), 97–117 (WLFTLGPILVVLPVFLSYLIV), 128–148 (VGTGIFLWIALSSIQPIGLLM), 166–186 (AAQSISYEIPLALSVLAIVMM), 204–224 (ILGWNIWRQPLGFMIFWIAAL), 266–286 (ILSALLVAVLYLGGWDFPIPI), 308–328 (ALGITMTLVKAYFLVFIAILL), and 347–367 (FLLPVGLVNLLLTAALKLAFP).

This sequence belongs to the complex I subunit 1 family. NDH-1 is composed of at least 11 different subunits.

It localises to the cellular thylakoid membrane. It carries out the reaction a plastoquinone + NADH + (n+1) H(+)(in) = a plastoquinol + NAD(+) + n H(+)(out). The catalysed reaction is a plastoquinone + NADPH + (n+1) H(+)(in) = a plastoquinol + NADP(+) + n H(+)(out). NDH-1 shuttles electrons from an unknown electron donor, via FMN and iron-sulfur (Fe-S) centers, to quinones in the respiratory and/or the photosynthetic chain. The immediate electron acceptor for the enzyme in this species is believed to be plastoquinone. Couples the redox reaction to proton translocation, and thus conserves the redox energy in a proton gradient. The protein is NAD(P)H-quinone oxidoreductase subunit 1 of Nostoc sp. (strain PCC 7120 / SAG 25.82 / UTEX 2576).